The chain runs to 92 residues: Co-chaperonin GroES (92 aa).

This sequence belongs to the GroES chaperonin family. As to quaternary structure, heptamer of 7 subunits arranged in a ring. Interacts with the chaperonin GroEL.

Its subcellular location is the cytoplasm. Functionally, together with the chaperonin GroEL, plays an essential role in assisting protein folding. The GroEL-GroES system forms a nano-cage that allows encapsulation of the non-native substrate proteins and provides a physical environment optimized to promote and accelerate protein folding. GroES binds to the apical surface of the GroEL ring, thereby capping the opening of the GroEL channel. This Methanosarcina mazei (strain ATCC BAA-159 / DSM 3647 / Goe1 / Go1 / JCM 11833 / OCM 88) (Methanosarcina frisia) protein is Co-chaperonin GroES.